An 848-amino-acid chain; its full sequence is Transforming growth factor beta receptor type 3 (848 aa).

Residues 1-20 form the signal peptide; sequence MTLHCVVALFALISSCLATA. The Extracellular segment spans residues 21–784; the sequence is GPEPGVQCAL…IFHGLDTLTV (764 aa). N-linked (GlcNAc...) asparagine glycosylation is found at Asn-34 and Asn-141. Cys-52 and Cys-197 are disulfide-bonded. Positions 390–448 are disordered; that stretch reads SGEGAARHGGLPFPFPYIPRRGRQDGGKDRLPRPKDPVVPSIQLLPGPREPQEAQGSRD. The span at 411-425 shows a compositional bias: basic and acidic residues; that stretch reads GRQDGGKDRLPRPKD. Residues 454-729 enclose the ZP domain; sequence RCDSEKMLVA…PKCVLPDEAC (276 aa). Asn-491 is a glycosylation site (N-linked (GlcNAc...) asparagine). O-linked (Xyl...) (glycosaminoglycan) serine glycans are attached at residues Ser-529, Ser-533, and Ser-544. Residues Asn-570, Asn-589, and Asn-696 are each glycosylated (N-linked (GlcNAc...) asparagine). Intrachain disulfides connect Cys-638/Cys-704, Cys-659/Cys-729, and Cys-709/Cys-722. The tract at residues 736–750 is interaction with TGF-beta ligand; that stretch reads MIWAMMQNKKTFTKP. The helical transmembrane segment at 785 to 806 threads the bilayer; sequence MGIAFAAFVIGALLTGALWYIY. Over 807-848 the chain is Cytoplasmic; it reads SHTGDSAGRQPVPTSPPASENSSAAHSLGSTQSTPCSSSSAA. The segment at 813–848 is disordered; sequence AGRQPVPTSPPASENSSAAHSLGSTQSTPCSSSSAA. Positions 833–848 are enriched in low complexity; the sequence is SLGSTQSTPCSSSSAA. A Phosphothreonine modification is found at Thr-837.

In terms of assembly, forms homodimers and homooligomers. Interacts with DYNLT4. Interacts with integrin ITGA5:ITGB1; this interaction promotes the internalization and trafficking of ITGA5:ITGB1 into endocytic vesicles. Interacts with TGFB1, BMP2, BMP5, BMP7 or GDF5 and inhibin A via the ligand binding domains. Interacts with ALK3/BMPR1A; this interaction results in the cell surface retention of BMPR1A. Interacts with ALK6/BMPR1B; this interaction enhances BMPR1B-mediated stimulation of the BMP signaling pathway. Interacts with the scaffolding protein beta-arrestin2/ARRB2; this interaction mediates internalization of TGFBR3 and thus regulates migration, actin cytoskeleton and activation of CDC42. Post-translationally, extensively modified by glycosaminoglycan groups (GAG). Phosphorylated in the cytoplasmic domain by the type II receptor TGFBR2 at THR-837 to mediate recruitment of ARRB2 and subsequent internalization of TGFBR2 and TGFBR3.

The protein localises to the cell membrane. Its subcellular location is the secreted. It is found in the extracellular space. It localises to the extracellular matrix. In terms of biological role, cell surface receptor that regulates diverse cellular processes including cell proliferation, differentiation, migration, and apoptosis. Initiates BMP, inhibin, and TGF-beta signaling pathways by interacting with different ligands including TGFB1, BMP2, BMP5, BMP7 or GDF5. Alternatively, acts as a cell surface coreceptor for BMP ligands, serving to enhance ligand binding by differentially regulating BMPR1A/ALK3 and BMPR1B/ALK6 receptor trafficking. Promotes epithelial cell adhesion, focal adhesion formation and integrin signaling during epithelial cell spreading on fibronectin. By interacting with the scaffolding protein beta-arrestin2/ARRB2, regulates migration or actin cytoskeleton and promotes the activation of CDC42 as well as the inhibition of NF-kappa-B. In gonadotrope cells, acts as an inhibin A coreceptor and regulates follicle-stimulating hormone (FSH) levels and female fertility. Plays a role in the inhibition of directed and random cell migration in epithelial cells by altering the actin cytoskeletal organization. Participates in epithelial-mesenchymal transformation (EMT) upon binding to BMP2 or TGFB2, by activating the PAR6/SMURF1/RHOA pathway. The polypeptide is Transforming growth factor beta receptor type 3 (TGFBR3) (Sus scrofa (Pig)).